The sequence spans 497 residues: uncharacterized protein (497 aa).

2 ABC transporter domains span residues 9 to 247 (VSVR…MGQA) and 256 to 496 (ARPA…TGMA). 41 to 48 (GGNGAGKS) contacts ATP.

It belongs to the ABC transporter superfamily. Ribose importer (TC 3.A.1.2.1) family.

Its subcellular location is the cell membrane. Its function is as follows. Probably part of the binding-protein-dependent transport system y4mIJK. This system probably transports a sugar. Probably responsible for energy coupling to the transport system. This is an uncharacterized protein from Sinorhizobium fredii (strain NBRC 101917 / NGR234).